An 82-amino-acid chain; its full sequence is Delta-actitoxin-Aeq2b 2 (82 aa).

A signal peptide spans 1–19; that stretch reads MNRLMILVFAAVFLALASA. A propeptide spanning residues 20 to 26 is cleaved from the precursor; the sequence is DEDVDIA. Disulfide bonds link Cys32/Cys79, Cys34/Cys69, and Cys62/Cys80.

It belongs to the sea anemone sodium channel inhibitory toxin family. Type I subfamily.

Its subcellular location is the secreted. The protein localises to the nematocyst. Binds specifically to voltage-gated sodium channels (Nav), thereby delaying their inactivation during signal transduction. Causes death to crabs. This Actinia equina (Beadlet anemone) protein is Delta-actitoxin-Aeq2b 2.